Consider the following 268-residue polypeptide: 4-hydroxy-tetrahydrodipicolinate reductase (268 aa).

G9–M14 contributes to the NAD(+) binding site. R36 provides a ligand contact to NADP(+). Residues G98 to T100 and A122 to T125 each bind NAD(+). The active-site Proton donor/acceptor is the H155. H156 contacts (S)-2,3,4,5-tetrahydrodipicolinate. The active-site Proton donor is K159. Residue G165–T166 coordinates (S)-2,3,4,5-tetrahydrodipicolinate.

The protein belongs to the DapB family.

It is found in the cytoplasm. It catalyses the reaction (S)-2,3,4,5-tetrahydrodipicolinate + NAD(+) + H2O = (2S,4S)-4-hydroxy-2,3,4,5-tetrahydrodipicolinate + NADH + H(+). It carries out the reaction (S)-2,3,4,5-tetrahydrodipicolinate + NADP(+) + H2O = (2S,4S)-4-hydroxy-2,3,4,5-tetrahydrodipicolinate + NADPH + H(+). It functions in the pathway amino-acid biosynthesis; L-lysine biosynthesis via DAP pathway; (S)-tetrahydrodipicolinate from L-aspartate: step 4/4. Catalyzes the conversion of 4-hydroxy-tetrahydrodipicolinate (HTPA) to tetrahydrodipicolinate. This chain is 4-hydroxy-tetrahydrodipicolinate reductase, found in Colwellia psychrerythraea (strain 34H / ATCC BAA-681) (Vibrio psychroerythus).